The sequence spans 617 residues: Dihydroxy-acid dehydratase (617 aa).

Residue Asp81 coordinates Mg(2+). Cys122 lines the [2Fe-2S] cluster pocket. Mg(2+) is bound by residues Asp123 and Lys124. At Lys124 the chain carries N6-carboxylysine. Cys197 provides a ligand contact to [2Fe-2S] cluster. Residue Glu494 participates in Mg(2+) binding. The active-site Proton acceptor is Ser520.

This sequence belongs to the IlvD/Edd family. In terms of assembly, homodimer. The cofactor is [2Fe-2S] cluster. It depends on Mg(2+) as a cofactor.

It catalyses the reaction (2R)-2,3-dihydroxy-3-methylbutanoate = 3-methyl-2-oxobutanoate + H2O. It carries out the reaction (2R,3R)-2,3-dihydroxy-3-methylpentanoate = (S)-3-methyl-2-oxopentanoate + H2O. Its pathway is amino-acid biosynthesis; L-isoleucine biosynthesis; L-isoleucine from 2-oxobutanoate: step 3/4. It functions in the pathway amino-acid biosynthesis; L-valine biosynthesis; L-valine from pyruvate: step 3/4. Functions in the biosynthesis of branched-chain amino acids. Catalyzes the dehydration of (2R,3R)-2,3-dihydroxy-3-methylpentanoate (2,3-dihydroxy-3-methylvalerate) into 2-oxo-3-methylpentanoate (2-oxo-3-methylvalerate) and of (2R)-2,3-dihydroxy-3-methylbutanoate (2,3-dihydroxyisovalerate) into 2-oxo-3-methylbutanoate (2-oxoisovalerate), the penultimate precursor to L-isoleucine and L-valine, respectively. This is Dihydroxy-acid dehydratase from Parafrankia sp. (strain EAN1pec).